Reading from the N-terminus, the 311-residue chain is 4-diphosphocytidyl-2-C-methyl-D-erythritol kinase (311 aa).

Lysine 16 is an active-site residue. 100–110 (PIGAGLAGGSS) lines the ATP pocket. Residue aspartate 142 is part of the active site.

Belongs to the GHMP kinase family. IspE subfamily.

It catalyses the reaction 4-CDP-2-C-methyl-D-erythritol + ATP = 4-CDP-2-C-methyl-D-erythritol 2-phosphate + ADP + H(+). The protein operates within isoprenoid biosynthesis; isopentenyl diphosphate biosynthesis via DXP pathway; isopentenyl diphosphate from 1-deoxy-D-xylulose 5-phosphate: step 3/6. In terms of biological role, catalyzes the phosphorylation of the position 2 hydroxy group of 4-diphosphocytidyl-2C-methyl-D-erythritol. The sequence is that of 4-diphosphocytidyl-2-C-methyl-D-erythritol kinase from Prochlorococcus marinus (strain AS9601).